We begin with the raw amino-acid sequence, 345 residues long: Viral Fc-gamma receptor-like protein UL119 (345 aa).

An N-terminal signal peptide occupies residues 1 to 23 (MCSVLAIALVVALLGDMHPGVKS). Residues 23–43 (SSTTSAVTSPSNTTVTSTTSI) form a disordered region. The Virion surface portion of the chain corresponds to 24 to 293 (STTSAVTSPS…IKSDPLFEDR (270 aa)). Residues N34, N48, N95, N104, N148, N179, N198, N217, N225, N241, N244, and N260 are each glycosylated (N-linked (GlcNAc...) asparagine; by host). One can recognise an Ig-like V-type domain in the interval 91–190 (QVSLNATCKV…TWDLFTYPIY (100 aa)). A helical membrane pass occupies residues 294–314 (LLAYGVLAFLVFMVIILLYVT). Over 315–345 (YMLARRRDWSYKRLEEPVEEKKHPVPYFKQW) the chain is Intravirion.

The protein localises to the virion membrane. Its function is as follows. Serves as a receptor for the Fc part of human IgG. May thus be involved in interfering with host Ig-mediated immune responses. The sequence is that of Viral Fc-gamma receptor-like protein UL119 (UL119/UL118) from Homo sapiens (Human).